Consider the following 193-residue polypeptide: dCTP deaminase (193 aa).

DCTP is bound by residues 110–115 (RSSLAR), D128, 136–138 (VLE), Y171, K178, and Q182. E138 (proton donor/acceptor) is an active-site residue. Residues 170-193 (PYNSRQDAKYRGQQGAVASRIDKD) are disordered.

Belongs to the dCTP deaminase family. As to quaternary structure, homotrimer.

It catalyses the reaction dCTP + H2O + H(+) = dUTP + NH4(+). Its pathway is pyrimidine metabolism; dUMP biosynthesis; dUMP from dCTP (dUTP route): step 1/2. Its function is as follows. Catalyzes the deamination of dCTP to dUTP. The protein is dCTP deaminase of Yersinia enterocolitica serotype O:8 / biotype 1B (strain NCTC 13174 / 8081).